A 498-amino-acid polypeptide reads, in one-letter code: ADP,ATP carrier protein 1 (498 aa).

Over 1–33 the chain is Cytoplasmic; it reads MNNPKNDNYLSELSKVIWPIERYENKKFLPMAF. A helical membrane pass occupies residues 34 to 54; the sequence is MMFCILLNYSTLRSIKDGFVV. A disulfide bridge connects residues cysteine 37 and cysteine 85. Topologically, residues 55–67 are extracellular; the sequence is TDIGAEAISFLKT. A helical membrane pass occupies residues 68-88; the sequence is YIVLPSAVIAMVIYVKLCDIL. The Cytoplasmic portion of the chain corresponds to 89-92; it reads KQEN. The helical transmembrane segment at 93–113 threads the bilayer; it reads VFYVITSFFLGYFALFAFVLY. Residues 114-147 lie on the Extracellular side of the membrane; that stretch reads PYPDLVHPDPETIESWSVAYPNVKWFIRIVGKWS. The chain crosses the membrane as a helical span at residues 148 to 168; sequence FASFYTMAELWGTMMLSLLFW. The Cytoplasmic segment spans residues 169-184; that stretch reads QFANQITKTDEAKRFY. The chain crosses the membrane as a helical span at residues 185–205; the sequence is SMFGLLANLALPVTSVIIGYC. At 206–218 the chain is on the extracellular side; that stretch reads LHEKTQIVAEHLK. Residues 219–239 traverse the membrane as a helical segment; that stretch reads FVPLFVIMITSSFLVILTYRW. Residues 240 to 279 are Cytoplasmic-facing; that stretch reads MNKNVLTDPRLYDPALVKEKKAKAKMSLIDSFKMIFTSKY. The helical transmembrane segment at 280-300 threads the bilayer; sequence VGYIALLLIAYGVSVNLVEGV. Topologically, residues 301-320 are extracellular; sequence WKSKVKELYPTKEAYTIYMG. Residues 321 to 341 traverse the membrane as a helical segment; the sequence is KFQFYQGWVAIAFMLIGSNIL. Residues 342-348 lie on the Cytoplasmic side of the membrane; that stretch reads RKVSWLT. Residues 349-369 traverse the membrane as a helical segment; that stretch reads AAMITPLMMLITGAAFFAFIF. Residues 370 to 379 are Extracellular-facing; it reads FDSVIAMHLT. A helical membrane pass occupies residues 380–400; it reads GILASGPLALAVMIGMIQNVL. Residues 401–438 lie on the Cytoplasmic side of the membrane; that stretch reads SKGVKYSLFDATKNMAYIPLDKDLRVKGQAAVEVIGGR. 436-442 is an ATP binding site; it reads GGRFGKS. Residues 439 to 459 traverse the membrane as a helical segment; it reads FGKSGGAIIQSTFFILFPAFG. At 460 to 465 the chain is on the extracellular side; that stretch reads FVEATP. The chain crosses the membrane as a helical span at residues 466 to 486; it reads YFASIFFVIVILWIYAVKGLN. Residues 487–498 lie on the Cytoplasmic side of the membrane; that stretch reads KEYKVLVNKTEK.

Belongs to the ADP/ATP translocase tlc family.

It is found in the cell membrane. In terms of biological role, provides the rickettsial cell with host ATP in exchange for rickettsial ADP. This is an obligate exchange system. This energy acquiring activity is an important component of rickettsial parasitism. The polypeptide is ADP,ATP carrier protein 1 (tlcA) (Rickettsia conorii (strain ATCC VR-613 / Malish 7)).